The primary structure comprises 30 residues: Glutathione S-transferase (30 aa).

Belongs to the GST superfamily. As to quaternary structure, monomer and homodimer.

It localises to the cytoplasm. The enzyme catalyses RX + glutathione = an S-substituted glutathione + a halide anion + H(+). Conjugation of reduced glutathione to a wide number of exogenous and endogenous hydrophobic electrophiles. This is Glutathione S-transferase from Pseudomonas fluorescens.